The primary structure comprises 372 residues: Queuine tRNA-ribosyltransferase (372 aa).

Catalysis depends on aspartate 89, which acts as the Proton acceptor. Residues 89–93 (DSGGF), aspartate 161, and glycine 232 each bind substrate. The interval 262-268 (GIGDLPS) is RNA binding. Aspartate 281 functions as the Nucleophile in the catalytic mechanism. The interval 286–290 (TKAAR) is RNA binding; important for wobble base 34 recognition. Residues cysteine 319, cysteine 321, cysteine 324, and histidine 351 each coordinate Zn(2+).

It belongs to the queuine tRNA-ribosyltransferase family. As to quaternary structure, homodimer. Within each dimer, one monomer is responsible for RNA recognition and catalysis, while the other monomer binds to the replacement base PreQ1. The cofactor is Zn(2+).

It catalyses the reaction 7-aminomethyl-7-carbaguanine + guanosine(34) in tRNA = 7-aminomethyl-7-carbaguanosine(34) in tRNA + guanine. It participates in tRNA modification; tRNA-queuosine biosynthesis. Catalyzes the base-exchange of a guanine (G) residue with the queuine precursor 7-aminomethyl-7-deazaguanine (PreQ1) at position 34 (anticodon wobble position) in tRNAs with GU(N) anticodons (tRNA-Asp, -Asn, -His and -Tyr). Catalysis occurs through a double-displacement mechanism. The nucleophile active site attacks the C1' of nucleotide 34 to detach the guanine base from the RNA, forming a covalent enzyme-RNA intermediate. The proton acceptor active site deprotonates the incoming PreQ1, allowing a nucleophilic attack on the C1' of the ribose to form the product. After dissociation, two additional enzymatic reactions on the tRNA convert PreQ1 to queuine (Q), resulting in the hypermodified nucleoside queuosine (7-(((4,5-cis-dihydroxy-2-cyclopenten-1-yl)amino)methyl)-7-deazaguanosine). In Chlamydia pneumoniae (Chlamydophila pneumoniae), this protein is Queuine tRNA-ribosyltransferase.